The sequence spans 386 residues: CRISPR system endoribonuclease Csm6' (386 aa).

The CARF domain stretch occupies residues 1–146 (MRVLISAVGD…ASNENIGHDN (146 aa)). The segment at 147–386 (DENIDELIEV…LNKILLTKLN (240 aa)) is HEPN domain.

Belongs to the CRISPR-associated Csm6 family. In terms of assembly, homodimer. The composite ssRNase active site is formed at the dimer interface.

Its activity is regulated as follows. Non-specific ssRNase activity is stimulated about 1000-fold by cyclic oligoadenylate (cOA), a second messenger produced by Cas10 of the ternary Csm effector complex in the presence of a cognate target RNA. Functionally, CRISPR (clustered regularly interspaced short palindromic repeat) is an adaptive immune system that provides protection against mobile genetic elements (viruses, transposable elements and conjugative plasmids). CRISPR clusters contain spacers, sequences complementary to antecedent mobile elements, and target invading nucleic acids. CRISPR clusters are transcribed and processed into CRISPR RNA (crRNA). The type III-A Csm complex binds crRNA and acts as a crRNA-guided RNase, DNase and cyclic oligoadenylate synthase; binding of target RNA cognate to the crRNA is required for all activities. In a heterologous host this Csm effector complex restricts ssRNA phage MS2, suggesting it may target RNA viruses in vivo. This protein is not part of the Csm complex. Csm functions as a non-specific ssDNase. Base-pairing between crRNA and target RNA to form a ternary Csm complex activates a ssDNase activity; target RNA cleavage suppresses the ssDNase, a temporal control that prevents uncontrolled DNA degradation. Viral RNA transcripts probably tether the Csm complex to the viral genome, recruiting Cas10 ssDNA activity which is able to degrade DNA in the transcription bubble, spatially controlling the DNase activity. Its function is as follows. A single-strand-specific endoribonuclease (ssRNase) that is approximately 1000-fold stimulated by cyclic oligoadenylate (cOA); although several species of cOA are synthesized by this organism only cyclic hexaadenylate (cA6) stimulates the ssRNase activity. Cleaves preferentially within GA or AA dinucleotides, although the presence of cA6 broadens the preference. The protein is CRISPR system endoribonuclease Csm6' of Streptococcus thermophilus.